Reading from the N-terminus, the 367-residue chain is S-adenosylmethionine:tRNA ribosyltransferase-isomerase (367 aa).

The disordered stretch occupies residues 150 to 182 (RHGEEEESSDEAISSQNPEIATESKRTPSNDDK). A compositionally biased stretch (basic and acidic residues) spans 171 to 182 (TESKRTPSNDDK).

This sequence belongs to the QueA family. In terms of assembly, monomer.

The protein localises to the cytoplasm. The enzyme catalyses 7-aminomethyl-7-carbaguanosine(34) in tRNA + S-adenosyl-L-methionine = epoxyqueuosine(34) in tRNA + adenine + L-methionine + 2 H(+). Its pathway is tRNA modification; tRNA-queuosine biosynthesis. In terms of biological role, transfers and isomerizes the ribose moiety from AdoMet to the 7-aminomethyl group of 7-deazaguanine (preQ1-tRNA) to give epoxyqueuosine (oQ-tRNA). In Rickettsia felis (strain ATCC VR-1525 / URRWXCal2) (Rickettsia azadi), this protein is S-adenosylmethionine:tRNA ribosyltransferase-isomerase.